Consider the following 539-residue polypeptide: CTP synthase (539 aa).

Residues 1–272 (MTLRSKMTKY…AQIILSHFKI (272 aa)) form an amidoligase domain region. Position 19 (serine 19) interacts with CTP. Position 19 (serine 19) interacts with UTP. 20–25 (GLGKGV) is a binding site for ATP. Residue tyrosine 60 participates in L-glutamine binding. Aspartate 77 is an ATP binding site. Positions 77 and 147 each coordinate Mg(2+). Residues 154-156 (DIE), 193-198 (KSKPTQ), and lysine 229 contribute to the CTP site. UTP contacts are provided by residues 193 to 198 (KSKPTQ) and lysine 229. Residues 298 to 539 (KILMVGKYVE…SFLRVLIKNN (242 aa)) enclose the Glutamine amidotransferase type-1 domain. L-glutamine is bound at residue glycine 360. Cysteine 387 (nucleophile; for glutamine hydrolysis) is an active-site residue. L-glutamine contacts are provided by residues 388–391 (LGFQ), glutamate 410, and arginine 469. Catalysis depends on residues histidine 514 and glutamate 516.

This sequence belongs to the CTP synthase family. As to quaternary structure, homotetramer.

The catalysed reaction is UTP + L-glutamine + ATP + H2O = CTP + L-glutamate + ADP + phosphate + 2 H(+). It catalyses the reaction L-glutamine + H2O = L-glutamate + NH4(+). The enzyme catalyses UTP + NH4(+) + ATP = CTP + ADP + phosphate + 2 H(+). It participates in pyrimidine metabolism; CTP biosynthesis via de novo pathway; CTP from UDP: step 2/2. Its activity is regulated as follows. Allosterically activated by GTP, when glutamine is the substrate; GTP has no effect on the reaction when ammonia is the substrate. The allosteric effector GTP functions by stabilizing the protein conformation that binds the tetrahedral intermediate(s) formed during glutamine hydrolysis. Inhibited by the product CTP, via allosteric rather than competitive inhibition. In terms of biological role, catalyzes the ATP-dependent amination of UTP to CTP with either L-glutamine or ammonia as the source of nitrogen. Regulates intracellular CTP levels through interactions with the four ribonucleotide triphosphates. In Mycoplasmopsis pulmonis (strain UAB CTIP) (Mycoplasma pulmonis), this protein is CTP synthase.